A 406-amino-acid chain; its full sequence is Haptoglobin (406 aa).

A signal peptide spans 1 to 18; sequence MSALGAVIALLLWGQLFA. Sushi domains follow at residues 31-88 and 90-147; these read DGCP…ECEA. Intrachain disulfides connect cysteine 52–cysteine 86, cysteine 111–cysteine 145, cysteine 149–cysteine 266, cysteine 309–cysteine 340, and cysteine 351–cysteine 381. One can recognise a Peptidase S1 domain in the interval 162-404; the sequence is ILGGHLDAKG…IQDWVQKTIA (243 aa). Asparagine 184 carries N-linked (GlcNAc...) (complex) asparagine glycosylation. Asparagine 207 and asparagine 211 each carry an N-linked (GlcNAc...) asparagine glycan. N-linked (GlcNAc...) (complex) asparagine glycosylation occurs at asparagine 241. The interval 318–323 is interaction with CD163; sequence VPEKKT.

It belongs to the peptidase S1 family. In terms of assembly, tetramer of two alpha and two beta chains; disulfide-linked. The hemoglobin/haptoglobin complex is composed of a haptoglobin dimer bound to two hemoglobin alpha-beta dimers. Interacts with CD163. Interacts with ERGIC3. As to expression, expressed by the liver and secreted in plasma.

The protein resides in the secreted. Functionally, as a result of hemolysis, hemoglobin is found to accumulate in the kidney and is secreted in the urine. Haptoglobin captures, and combines with free plasma hemoglobin to allow hepatic recycling of heme iron and to prevent kidney damage. Haptoglobin also acts as an antioxidant, has antibacterial activity, and plays a role in modulating many aspects of the acute phase response. Hemoglobin/haptoglobin complexes are rapidly cleared by the macrophage CD163 scavenger receptor expressed on the surface of liver Kupfer cells through an endocytic lysosomal degradation pathway. In terms of biological role, the uncleaved form of allele alpha-2 (2-2), known as zonulin, plays a role in intestinal permeability, allowing intercellular tight junction disassembly, and controlling the equilibrium between tolerance and immunity to non-self antigens. This chain is Haptoglobin (HP), found in Homo sapiens (Human).